Consider the following 321-residue polypeptide: Glucokinase (321 aa).

Residue 8-13 coordinates ATP; that stretch reads GDVGGT.

It belongs to the bacterial glucokinase family.

The protein localises to the cytoplasm. It carries out the reaction D-glucose + ATP = D-glucose 6-phosphate + ADP + H(+). This chain is Glucokinase, found in Citrobacter koseri (strain ATCC BAA-895 / CDC 4225-83 / SGSC4696).